Reading from the N-terminus, the 163-residue chain is Phosphopantetheine adenylyltransferase (163 aa).

S10 serves as a coordination point for substrate. Residues S10–F11 and H18 each bind ATP. Positions 42, 74, and 88 each coordinate substrate. ATP is bound by residues G89 to R91, E99, and Y124 to S130.

It belongs to the bacterial CoaD family. In terms of assembly, homohexamer. The cofactor is Mg(2+).

It localises to the cytoplasm. The catalysed reaction is (R)-4'-phosphopantetheine + ATP + H(+) = 3'-dephospho-CoA + diphosphate. It functions in the pathway cofactor biosynthesis; coenzyme A biosynthesis; CoA from (R)-pantothenate: step 4/5. Functionally, reversibly transfers an adenylyl group from ATP to 4'-phosphopantetheine, yielding dephospho-CoA (dPCoA) and pyrophosphate. The polypeptide is Phosphopantetheine adenylyltransferase (Bacillus anthracis (strain A0248)).